The sequence spans 140 residues: Nucleoside diphosphate kinase (140 aa).

Lysine 11, phenylalanine 59, arginine 87, threonine 93, arginine 104, and asparagine 114 together coordinate ATP. The active-site Pros-phosphohistidine intermediate is histidine 117.

The protein belongs to the NDK family. As to quaternary structure, homotetramer. The cofactor is Mg(2+).

It is found in the cytoplasm. It carries out the reaction a 2'-deoxyribonucleoside 5'-diphosphate + ATP = a 2'-deoxyribonucleoside 5'-triphosphate + ADP. The enzyme catalyses a ribonucleoside 5'-diphosphate + ATP = a ribonucleoside 5'-triphosphate + ADP. In terms of biological role, major role in the synthesis of nucleoside triphosphates other than ATP. The ATP gamma phosphate is transferred to the NDP beta phosphate via a ping-pong mechanism, using a phosphorylated active-site intermediate. The sequence is that of Nucleoside diphosphate kinase from Ruegeria pomeroyi (strain ATCC 700808 / DSM 15171 / DSS-3) (Silicibacter pomeroyi).